Reading from the N-terminus, the 227-residue chain is Cytochrome c oxidase subunit 2 (227 aa).

Topologically, residues 1-14 (MAHPAQLGLQDATS) are mitochondrial intermembrane. A helical membrane pass occupies residues 15-45 (PVMEELITFHDHALMAMSLISLLVLYALFST). Residues 46–59 (LTTKMTNTNITDAQ) lie on the Mitochondrial matrix side of the membrane. The chain crosses the membrane as a helical span at residues 60–87 (EMETIWTILPAIILVLIAFPSLRILYMT). The Mitochondrial intermembrane portion of the chain corresponds to 88-227 (DEVNNPSFTI…IFEMGPVFTL (140 aa)). Cu cation-binding residues include His-161, Cys-196, Glu-198, Cys-200, His-204, and Met-207. Glu-198 lines the Mg(2+) pocket.

Belongs to the cytochrome c oxidase subunit 2 family. As to quaternary structure, component of the cytochrome c oxidase (complex IV, CIV), a multisubunit enzyme composed of 14 subunits. The complex is composed of a catalytic core of 3 subunits MT-CO1, MT-CO2 and MT-CO3, encoded in the mitochondrial DNA, and 11 supernumerary subunits COX4I, COX5A, COX5B, COX6A, COX6B, COX6C, COX7A, COX7B, COX7C, COX8 and NDUFA4, which are encoded in the nuclear genome. The complex exists as a monomer or a dimer and forms supercomplexes (SCs) in the inner mitochondrial membrane with NADH-ubiquinone oxidoreductase (complex I, CI) and ubiquinol-cytochrome c oxidoreductase (cytochrome b-c1 complex, complex III, CIII), resulting in different assemblies (supercomplex SCI(1)III(2)IV(1) and megacomplex MCI(2)III(2)IV(2)). Found in a complex with TMEM177, COA6, COX18, COX20, SCO1 and SCO2. Interacts with TMEM177 in a COX20-dependent manner. Interacts with COX20. Interacts with COX16. Requires Cu cation as cofactor.

The protein resides in the mitochondrion inner membrane. The enzyme catalyses 4 Fe(II)-[cytochrome c] + O2 + 8 H(+)(in) = 4 Fe(III)-[cytochrome c] + 2 H2O + 4 H(+)(out). Functionally, component of the cytochrome c oxidase, the last enzyme in the mitochondrial electron transport chain which drives oxidative phosphorylation. The respiratory chain contains 3 multisubunit complexes succinate dehydrogenase (complex II, CII), ubiquinol-cytochrome c oxidoreductase (cytochrome b-c1 complex, complex III, CIII) and cytochrome c oxidase (complex IV, CIV), that cooperate to transfer electrons derived from NADH and succinate to molecular oxygen, creating an electrochemical gradient over the inner membrane that drives transmembrane transport and the ATP synthase. Cytochrome c oxidase is the component of the respiratory chain that catalyzes the reduction of oxygen to water. Electrons originating from reduced cytochrome c in the intermembrane space (IMS) are transferred via the dinuclear copper A center (CU(A)) of subunit 2 and heme A of subunit 1 to the active site in subunit 1, a binuclear center (BNC) formed by heme A3 and copper B (CU(B)). The BNC reduces molecular oxygen to 2 water molecules using 4 electrons from cytochrome c in the IMS and 4 protons from the mitochondrial matrix. This Mandrillus leucophaeus (Drill) protein is Cytochrome c oxidase subunit 2 (MT-CO2).